The following is a 379-amino-acid chain: UDP-N-acetylglucosamine--N-acetylmuramyl-(pentapeptide) pyrophosphoryl-undecaprenol N-acetylglucosamine transferase (379 aa).

Residues 13 to 15 (TGG), asparagine 123, arginine 166, serine 194, and glutamine 295 each bind UDP-N-acetyl-alpha-D-glucosamine.

This sequence belongs to the glycosyltransferase 28 family. MurG subfamily.

It localises to the cell inner membrane. The catalysed reaction is di-trans,octa-cis-undecaprenyl diphospho-N-acetyl-alpha-D-muramoyl-L-alanyl-D-glutamyl-meso-2,6-diaminopimeloyl-D-alanyl-D-alanine + UDP-N-acetyl-alpha-D-glucosamine = di-trans,octa-cis-undecaprenyl diphospho-[N-acetyl-alpha-D-glucosaminyl-(1-&gt;4)]-N-acetyl-alpha-D-muramoyl-L-alanyl-D-glutamyl-meso-2,6-diaminopimeloyl-D-alanyl-D-alanine + UDP + H(+). The protein operates within cell wall biogenesis; peptidoglycan biosynthesis. Cell wall formation. Catalyzes the transfer of a GlcNAc subunit on undecaprenyl-pyrophosphoryl-MurNAc-pentapeptide (lipid intermediate I) to form undecaprenyl-pyrophosphoryl-MurNAc-(pentapeptide)GlcNAc (lipid intermediate II). This chain is UDP-N-acetylglucosamine--N-acetylmuramyl-(pentapeptide) pyrophosphoryl-undecaprenol N-acetylglucosamine transferase, found in Rhodospirillum centenum (strain ATCC 51521 / SW).